Here is a 554-residue protein sequence, read N- to C-terminus: CTP synthase (554 aa).

An amidoligase domain region spans residues 1–265 (MTPLIFVTGG…DEIVIDQFKL (265 aa)). Ser-13 serves as a coordination point for CTP. Ser-13 lines the UTP pocket. Residues 14 to 19 (SLGKGI) and Asp-71 contribute to the ATP site. Residues Asp-71 and Glu-139 each contribute to the Mg(2+) site. CTP-binding positions include 146–148 (DIE), 186–191 (KTKPTQ), and Lys-222. UTP is bound by residues 186-191 (KTKPTQ) and Lys-222. The region spanning 292-545 (TIAVVGKYVD…VKASRARKAG (254 aa)) is the Glutamine amidotransferase type-1 domain. An L-glutamine-binding site is contributed by Gly-353. Cys-380 functions as the Nucleophile; for glutamine hydrolysis in the catalytic mechanism. L-glutamine-binding positions include 381–384 (YGMQ), Glu-404, and Arg-471. Active-site residues include His-518 and Glu-520.

The protein belongs to the CTP synthase family. As to quaternary structure, homotetramer.

It carries out the reaction UTP + L-glutamine + ATP + H2O = CTP + L-glutamate + ADP + phosphate + 2 H(+). The catalysed reaction is L-glutamine + H2O = L-glutamate + NH4(+). The enzyme catalyses UTP + NH4(+) + ATP = CTP + ADP + phosphate + 2 H(+). Its pathway is pyrimidine metabolism; CTP biosynthesis via de novo pathway; CTP from UDP: step 2/2. Allosterically activated by GTP, when glutamine is the substrate; GTP has no effect on the reaction when ammonia is the substrate. The allosteric effector GTP functions by stabilizing the protein conformation that binds the tetrahedral intermediate(s) formed during glutamine hydrolysis. Inhibited by the product CTP, via allosteric rather than competitive inhibition. Catalyzes the ATP-dependent amination of UTP to CTP with either L-glutamine or ammonia as the source of nitrogen. Regulates intracellular CTP levels through interactions with the four ribonucleotide triphosphates. The sequence is that of CTP synthase from Xylella fastidiosa (strain M12).